The chain runs to 228 residues: Aspartate racemase (228 aa).

Position 47–49 (47–49) interacts with substrate; it reads DRT. Cys82 functions as the Proton donor/acceptor in the catalytic mechanism. Residues 83 to 85 and Lys164 each bind substrate; that span reads NTA. The active-site Proton donor/acceptor is the Cys194.

This sequence belongs to the aspartate/glutamate racemases family. As to quaternary structure, homodimer. The existence of the interchain disulfide bond seen in the crystal structures is uncertain, but disulfide bonds have been reported for cytoplasmic proteins from thermophiles.

The enzyme catalyses L-aspartate = D-aspartate. Weakly inhibited by citrate, but not by asparagine. The polypeptide is Aspartate racemase (Pyrococcus horikoshii (strain ATCC 700860 / DSM 12428 / JCM 9974 / NBRC 100139 / OT-3)).